The sequence spans 411 residues: MGNTDDVKAVKPEKLSSPPPPAAPDQSNSHVYPDWAAMQAYYGPRVALPPYFNPAVASGQSPHPYMWGPPQPVMPPYGVPYAALYAHGGVYAHPGVPLAASPMSMDTHAKSSGTNEHGLIKKLKGHDDLAMSIGNGKADSSEGEMERTLSQSKETEGSSDGSNENSKRAAVNGRKRGRDEAPNMIGEVKIETQSSVIPSPRAKSEKLLGITVATPMVAGKVVGTVVSPSMTSSLELKDSPKEHAVNSPAGGQQPSTMMPNDSWLHNDRDLKRERRKQSNRESARRSRLRKQAEAEELAIKVDSLTAENMALKAEINRLTLTAEKLTNDNSRLLEVMKNAQAERAADVGLGNNNEKKASTLSTANLLSRVDNAGSGDRDEGESDVYEKTTKSGAKLHQLLDANPRTDAVAAG.

Basic and acidic residues predominate over residues 1-14 (MGNTDDVKAVKPEK). 3 disordered regions span residues 1–30 (MGNT…SNSH), 130–197 (AMSI…SSVI), and 232–293 (SSLE…KQAE). Residues 148 to 164 (TLSQSKETEGSSDGSNE) are compositionally biased toward polar residues. Over residues 235 to 244 (ELKDSPKEHA) the composition is skewed to basic and acidic residues. Polar residues predominate over residues 249 to 259 (AGGQQPSTMMP). The span at 264-293 (LHNDRDLKRERRKQSNRESARRSRLRKQAE) shows a compositional bias: basic and acidic residues. The bZIP domain maps to 269 to 332 (DLKRERRKQS…EKLTNDNSRL (64 aa)). The segment at 271–290 (KRERRKQSNRESARRSRLRK) is basic motif. The leucine-zipper stretch occupies residues 297 to 332 (LAIKVDSLTAENMALKAEINRLTLTAEKLTNDNSRL). A disordered region spans residues 346–411 (DVGLGNNNEK…NPRTDAVAAG (66 aa)).

This sequence belongs to the bZIP family. Binds DNA as a dimer.

The protein resides in the nucleus. Its function is as follows. Binds to the G-box-like motif (5'-ACGTGGC-3') of the chalcone synthase (CHS) gene promoter. G-box and G-box-like motifs are defined in promoters of certain plant genes which are regulated by such diverse stimuli as light-induction or hormone control. The protein is Common plant regulatory factor 1 (CPRF1) of Petroselinum crispum (Parsley).